Here is a 364-residue protein sequence, read N- to C-terminus: Coproporphyrin III ferrochelatase (364 aa).

R29 and Y118 together coordinate Fe-coproporphyrin III. Fe(2+) is bound by residues H169 and E250.

This sequence belongs to the ferrochelatase family.

The protein resides in the cytoplasm. It carries out the reaction Fe-coproporphyrin III + 2 H(+) = coproporphyrin III + Fe(2+). It participates in porphyrin-containing compound metabolism; protoheme biosynthesis. Its function is as follows. Involved in coproporphyrin-dependent heme b biosynthesis. Catalyzes the insertion of ferrous iron into coproporphyrin III to form Fe-coproporphyrin III. The sequence is that of Coproporphyrin III ferrochelatase from Streptococcus pneumoniae (strain Hungary19A-6).